A 366-amino-acid chain; its full sequence is Tetraacyldisaccharide 4'-kinase (366 aa).

Residue 62–69 (RVGGTGKT) coordinates ATP.

It belongs to the LpxK family.

The enzyme catalyses a lipid A disaccharide + ATP = a lipid IVA + ADP + H(+). Its pathway is glycolipid biosynthesis; lipid IV(A) biosynthesis; lipid IV(A) from (3R)-3-hydroxytetradecanoyl-[acyl-carrier-protein] and UDP-N-acetyl-alpha-D-glucosamine: step 6/6. In terms of biological role, transfers the gamma-phosphate of ATP to the 4'-position of a tetraacyldisaccharide 1-phosphate intermediate (termed DS-1-P) to form tetraacyldisaccharide 1,4'-bis-phosphate (lipid IVA). This chain is Tetraacyldisaccharide 4'-kinase, found in Polynucleobacter necessarius subsp. necessarius (strain STIR1).